We begin with the raw amino-acid sequence, 246 residues long: Adenosylcobinamide-GDP ribazoletransferase (246 aa).

6 consecutive transmembrane segments (helical) span residues 37–57, 64–84, 100–122, 139–159, 185–205, and 223–243; these read FPAV…AGAL, ALAA…DGLA, LLAV…LQLL, ALVL…WWLM, LAAA…VLWW, and AGIE…GLWI.

This sequence belongs to the CobS family. Mg(2+) is required as a cofactor.

It is found in the cell inner membrane. It carries out the reaction alpha-ribazole + adenosylcob(III)inamide-GDP = adenosylcob(III)alamin + GMP + H(+). It catalyses the reaction alpha-ribazole 5'-phosphate + adenosylcob(III)inamide-GDP = adenosylcob(III)alamin 5'-phosphate + GMP + H(+). Its pathway is cofactor biosynthesis; adenosylcobalamin biosynthesis; adenosylcobalamin from cob(II)yrinate a,c-diamide: step 7/7. Joins adenosylcobinamide-GDP and alpha-ribazole to generate adenosylcobalamin (Ado-cobalamin). Also synthesizes adenosylcobalamin 5'-phosphate from adenosylcobinamide-GDP and alpha-ribazole 5'-phosphate. The sequence is that of Adenosylcobinamide-GDP ribazoletransferase from Novosphingobium aromaticivorans (strain ATCC 700278 / DSM 12444 / CCUG 56034 / CIP 105152 / NBRC 16084 / F199).